The sequence spans 175 residues: MADQADVLADPDFEEETSIQKFKRRLKEEPLIPLGCAATCYALYRAYRSGKAKDSVEMNRMFRARIYAQFFTLLAVVAGGMYYKTERKQRREFEKKVEERKAQEKRDAWLRELEARDKEDKGWKERHAAVSVTAKKETEGAVDKNVNQAPTEEVVEKRGTGILDAVKALVQGKKD.

The HIG1 domain maps to 3 to 94 (DQADVLADPD…TERKQRREFE (92 aa)). Transmembrane regions (helical) follow at residues 30–46 (PLIP…LYRA) and 66–83 (IYAQ…GMYY). The stretch at 83-115 (YKTERKQRREFEKKVEERKAQEKRDAWLRELEA) forms a coiled coil.

Belongs to the RCF1 family. In terms of assembly, associates with the respiratory chain complex III/complex IV supercomplex.

It localises to the mitochondrion membrane. In terms of biological role, cytochrome c oxidase subunit which plays a role in assembly of respiratory supercomplexes. The protein is Respiratory supercomplex factor 1-B, mitochondrial (rcf1-B) of Talaromyces marneffei (strain ATCC 18224 / CBS 334.59 / QM 7333) (Penicillium marneffei).